The following is a 1455-amino-acid chain: Membrane-associated guanylate kinase, WW and PDZ domain-containing protein 2 (1455 aa).

Residues 17–101 (ESVIGRNPEG…PLRLKCVKQG (85 aa)) form the PDZ 1 domain. A Guanylate kinase-like domain is found at 109 to 283 (RHYLNLRFQK…APVYSQPEEL (175 aa)). The disordered stretch occupies residues 205–306 (PGATPSAEGK…DNEEPDPLPD (102 aa)). Positions 241 to 252 (VVNGNGVVVTPE) are enriched in low complexity. Over residues 281–296 (EELKEQMDDTKPTKPE) the composition is skewed to basic and acidic residues. 2 WW domains span residues 302–335 (DPLP…DPRL) and 348–381 (NELP…NPVL). The tract at residues 302 to 381 (DPLPDNWEMA…RRTQFENPVL (80 aa)) is interaction with DDN. The residue at position 362 (Tyr-362) is a Phosphotyrosine. PDZ domains lie at 426–510 (STTL…CRGY) and 605–683 (TLTI…HRGG). Ser-686 carries the post-translational modification Phosphoserine. Residues 778–860 (DVHLRRMESG…NGQVNLTVRR (83 aa)) enclose the PDZ 4 domain. Tyr-827 is subject to Phosphotyrosine. A disordered region spans residues 869-913 (CPENGRSPGSVSTHHSSPRSDYATYTNSNHAAPSSNASPPEGFAS). Phosphoserine is present on residues Ser-884 and Ser-885. Low complexity predominate over residues 895–908 (NSNHAAPSSNASPP). Residues 920 to 1010 (DVVIHRKENE…SVTLRIIPQE (91 aa)) form the PDZ 5 domain. The segment covering 1011-1040 (ELNSPTSAPSSEKQSPMAQQSPLAQQSPLA) has biased composition (polar residues). The disordered stretch occupies residues 1011–1136 (ELNSPTSAPS…PDTRQYPLSD (126 aa)). The residue at position 1014 (Ser-1014) is a Phosphoserine. Positions 1067–1083 (NSYRSEVKARQDVKPDI) are enriched in basic and acidic residues. The PDZ 6 domain occupies 1147-1229 (TVDMEKGAKG…RVRLLLKRGT (83 aa)). The segment at 1231 to 1455 (QVPEYDEPAP…LKPGASAASR (225 aa)) is disordered. The span at 1238–1249 (PAPWSSPAAAAP) shows a compositional bias: low complexity. The span at 1287–1299 (DIKREHDVRKPKE) shows a compositional bias: basic and acidic residues. 3 stretches are compositionally biased toward low complexity: residues 1346–1363 (EARA…AARA), 1399–1412 (ALEA…RAGP), and 1422–1433 (APARKAAVAPGP).

Belongs to the MAGUK family. As to quaternary structure, interacts (via its WW domains) with DRPLA. Interacts (via its second PDZ domain) with PTEN (via unphosphorylated C-terminus); this interaction diminishes the degradation rate of PTEN. Interacts (via guanylate kinase domain) with DLGAP1. Interacts (via the PDZ domains) with GRIN2A, GRID2 and NLGN1. Interacts with CTNND2, CTNNB1, MAGUIN-1, ACVR2A, SMAD2 and SMAD3. Part of a complex consisting of MAGI2/ARIP1, ACVR2A, ACVR1B and SMAD3. May interact with HTR2A. Interacts with IGSF9, RAPGEF2 and HTR4. Identified in a complex with ACTN4, CASK, IQGAP1, NPHS1, SPTAN1 and SPTBN1. Found in a complex, at least composed of KIDINS220, MAGI2, NTRK1 and RAPGEF2; the complex is mainly formed at late endosomes in a NGF-dependent manner. Interacts with RAPGEF2; the interaction occurs before or after nerve growth factor (NGF) stimulation. Interacts (via PDZ domain) with KIDINS220 (via C-terminal domain). Interacts with DDN. Interacts with DLL1. Found in a complex with IGSF9B and NLGN2; the interaction with IGSF9B is mediated via the PDZ 5 and PDZ 6 domains, while the interaction with NLGN2 is mediated via the WW1, WW2 and PDZ2 domains. Interacts (via PDZ 6 domain) with USH1G (via SAM domain); the interaction is triggered by phosphorylation of USH1G by CK2 and negatively regulates MAGI2-mediated endocytosis. As to expression, specifically expressed in brain.

The protein resides in the cytoplasm. It is found in the late endosome. Its subcellular location is the synapse. It localises to the synaptosome. The protein localises to the cell membrane. The protein resides in the cytoskeleton. It is found in the microtubule organizing center. Its subcellular location is the centrosome. It localises to the cell projection. The protein localises to the cilium. The protein resides in the centriole. It is found in the photoreceptor inner segment. Its subcellular location is the photoreceptor outer segment. Its function is as follows. Seems to act as a scaffold molecule at synaptic junctions by assembling neurotransmitter receptors and cell adhesion proteins. Plays a role in nerve growth factor (NGF)-induced recruitment of RAPGEF2 to late endosomes and neurite outgrowth. May play a role in regulating activin-mediated signaling in neuronal cells. Enhances the ability of PTEN to suppress AKT1 activation. Plays a role in receptor-mediated clathrin-dependent endocytosis which is required for ciliogenesis. The polypeptide is Membrane-associated guanylate kinase, WW and PDZ domain-containing protein 2 (MAGI2) (Homo sapiens (Human)).